Here is a 460-residue protein sequence, read N- to C-terminus: Serine/threonine-protein kinase cds1 (460 aa).

One can recognise an FHA domain in the interval 60 to 116; sequence WRFGRHKSCEVVLNGPRVSNFHFEIYQGHRNDSDESENVVFLHDHSSNGTFLNFERL. Residues 167 to 433 form the Protein kinase domain; sequence YEIIRTLGSG…ESEALQHPWF (267 aa). ATP is bound by residues 173-181 and K196; that span reads LGSGTFAVV. D294 serves as the catalytic Proton acceptor. Over residues 438 to 453 the composition is skewed to basic and acidic residues; sequence THEHRTPPSSSEHEAT. The tract at residues 438 to 460 is disordered; sequence THEHRTPPSSSEHEATEQLNSSS. Position 443 is a phosphothreonine (T443).

It belongs to the protein kinase superfamily. CAMK Ser/Thr protein kinase family. CHEK2 subfamily. Interacts with rad26. Post-translationally, autophosphorylated.

The catalysed reaction is L-seryl-[protein] + ATP = O-phospho-L-seryl-[protein] + ADP + H(+). It catalyses the reaction L-threonyl-[protein] + ATP = O-phospho-L-threonyl-[protein] + ADP + H(+). Its function is as follows. Has a role in the DNA replication-monitoring S/G2 checkpoint system. It is responsible for blocking mitosis in the S phase. It monitors DNA synthesis by interacting with DNA polymerase alpha and sends a signal to block the onset of mitosis while DNA synthesis is in progress. Phosphorylates rad60 and dna2. The sequence is that of Serine/threonine-protein kinase cds1 (cds1) from Schizosaccharomyces pombe (strain 972 / ATCC 24843) (Fission yeast).